The sequence spans 366 residues: Carbamoyl phosphate synthase small chain (366 aa).

Positions 1–168 are CPSase; it reads MYGILVLEDG…KETVVYSADD (168 aa). Residues Ser-45, Gly-220, and Gly-222 each contribute to the L-glutamine site. The Glutamine amidotransferase type-1 domain occupies 172 to 363; the sequence is KCVLIDCGVK…VELGIKFKAE (192 aa). The Nucleophile role is filled by Cys-247. The L-glutamine site is built by Leu-248, Gln-251, Asn-289, Gly-291, and Phe-292. Catalysis depends on residues His-336 and Glu-338.

Belongs to the CarA family. In terms of assembly, composed of two chains; the small (or glutamine) chain promotes the hydrolysis of glutamine to ammonia, which is used by the large (or ammonia) chain to synthesize carbamoyl phosphate. Tetramer of heterodimers (alpha,beta)4.

The enzyme catalyses hydrogencarbonate + L-glutamine + 2 ATP + H2O = carbamoyl phosphate + L-glutamate + 2 ADP + phosphate + 2 H(+). The catalysed reaction is L-glutamine + H2O = L-glutamate + NH4(+). It functions in the pathway amino-acid biosynthesis; L-arginine biosynthesis; carbamoyl phosphate from bicarbonate: step 1/1. Its pathway is pyrimidine metabolism; UMP biosynthesis via de novo pathway; (S)-dihydroorotate from bicarbonate: step 1/3. Its function is as follows. Small subunit of the glutamine-dependent carbamoyl phosphate synthetase (CPSase). CPSase catalyzes the formation of carbamoyl phosphate from the ammonia moiety of glutamine, carbonate, and phosphate donated by ATP, constituting the first step of 2 biosynthetic pathways, one leading to arginine and/or urea and the other to pyrimidine nucleotides. The small subunit (glutamine amidotransferase) binds and cleaves glutamine to supply the large subunit with the substrate ammonia. In Methanococcus maripaludis (strain C6 / ATCC BAA-1332), this protein is Carbamoyl phosphate synthase small chain.